Here is a 300-residue protein sequence, read N- to C-terminus: Recombination-promoting nuclease RpnC (300 aa).

This sequence belongs to the Rpn/YhgA-like nuclease family.

A low activity DNA endonuclease yielding 3'-hydroxyl ends. Upon expression enhances RecA-independent DNA recombination 2.9-fold, concomitantly reducing viability by 59% and inducing DNA damage as measured by induction of the SOS repair response. This is Recombination-promoting nuclease RpnC from Escherichia coli (strain K12).